Reading from the N-terminus, the 311-residue chain is Cytosolic Fe-S cluster assembly factor Nubp1 homolog (311 aa).

4 residues coordinate [4Fe-4S] cluster: Cys-9, Cys-23, Cys-26, and Cys-32. 63 to 70 (GKGGVGKS) lines the ATP pocket. The [4Fe-4S] cluster site is built by Cys-240 and Cys-243.

Belongs to the Mrp/NBP35 ATP-binding proteins family. NUBP1/NBP35 subfamily. As to quaternary structure, heterotetramer of 2 Nubp1 and 2 Nubp2 chains. [4Fe-4S] cluster serves as cofactor.

It is found in the cytoplasm. In terms of biological role, component of the cytosolic iron-sulfur (Fe/S) protein assembly (CIA) machinery. Required for maturation of extramitochondrial Fe-S proteins. The Nubp1-Nubp2 heterotetramer forms a Fe-S scaffold complex, mediating the de novo assembly of an Fe-S cluster and its transfer to target apoproteins. This is Cytosolic Fe-S cluster assembly factor Nubp1 homolog from Drosophila pseudoobscura pseudoobscura (Fruit fly).